The sequence spans 935 residues: 2-oxoglutarate dehydrogenase E1 component (935 aa).

The protein belongs to the alpha-ketoglutarate dehydrogenase family. As to quaternary structure, homodimer. Part of the 2-oxoglutarate dehydrogenase (OGDH) complex composed of E1 (2-oxoglutarate dehydrogenase), E2 (dihydrolipoamide succinyltransferase) and E3 (dihydrolipoamide dehydrogenase); the complex contains multiple copies of the three enzymatic components (E1, E2 and E3). Thiamine diphosphate is required as a cofactor.

The enzyme catalyses N(6)-[(R)-lipoyl]-L-lysyl-[protein] + 2-oxoglutarate + H(+) = N(6)-[(R)-S(8)-succinyldihydrolipoyl]-L-lysyl-[protein] + CO2. Its function is as follows. E1 component of the 2-oxoglutarate dehydrogenase (OGDH) complex which catalyzes the decarboxylation of 2-oxoglutarate, the first step in the conversion of 2-oxoglutarate to succinyl-CoA and CO(2). In Haemophilus influenzae (strain ATCC 51907 / DSM 11121 / KW20 / Rd), this protein is 2-oxoglutarate dehydrogenase E1 component (sucA).